The following is a 778-amino-acid chain: Arf-GAP with coiled-coil, ANK repeat and PH domain-containing protein 2 (778 aa).

The BAR domain maps to Met1–Arg226. The PH domain occupies Gly266–Ala361. The segment at Ser371 to Ser391 is disordered. Over residues Ser379 to Gly388 the composition is skewed to polar residues. Phosphoserine is present on residues Ser384 and Ser387. An Arf-GAP domain is found at Glu399 to Leu520. A C4-type zinc finger spans residues Cys414–Cys437. The residue at position 521 (Ser521) is a Phosphoserine. The tract at residues Ser540–Leu599 is disordered. Residues Ala552–Ser569 show a composition bias toward polar residues. A phosphoserine mark is found at Ser581 and Ser584. 3 ANK repeats span residues Asn640–Gln669, Gln673–Ala702, and Glu706–Met735. Tyr742 is subject to Phosphotyrosine. At Ser775 the chain carries Phosphoserine.

In terms of assembly, interacts (via KANK domains) with RAB35 (GTP-bound form); the interaction is direct and probably recruits ACAP2 to membranes including plasma membrane. Interacts with MICALL1; the interaction is indirect through RAB35. In terms of tissue distribution, widely expressed. Highest level in lung.

Its subcellular location is the cell membrane. It localises to the endosome membrane. GAP activity stimulated by phosphatidylinositol 4,5-bisphosphate (PIP2) and phosphatidic acid. Functionally, GTPase-activating protein (GAP) for ADP ribosylation factor 6 (ARF6). Doesn't show GAP activity for RAB35. This Homo sapiens (Human) protein is Arf-GAP with coiled-coil, ANK repeat and PH domain-containing protein 2 (ACAP2).